Here is a 143-residue protein sequence, read N- to C-terminus: Putative complexin-1 (143 aa).

The tract at residues 15-71 (NEVTGGLGLKDDGGEKTETGEDPEVVAARLEQEERRKEKHRKMEQEREKMRQGIRDK) is disordered. Basic and acidic residues-rich tracts occupy residues 23–33 (LKDDGGEKTET) and 44–71 (LEQEERRKEKHRKMEQEREKMRQGIRDK). Residues 40 to 71 (VAARLEQEERRKEKHRKMEQEREKMRQGIRDK) are a coiled coil.

This sequence belongs to the complexin/synaphin family.

The protein localises to the cytoplasm. The protein resides in the cytosol. In terms of biological role, positively regulates a late step in synaptic vesicle exocytosis. The polypeptide is Putative complexin-1 (cpx-1) (Caenorhabditis briggsae).